The primary structure comprises 245 residues: Protein mlo1 (245 aa).

The 35-residue stretch at 4–38 folds into the SAP domain; that stretch reads YKSLKVAELREKLAEKGLSTAGNKAELVSRLTAAT. The segment at 32–245 is disordered; it reads SRLTAATESN…AERFGVAAKN (214 aa). The span at 37–52 shows a compositional bias: low complexity; sequence ATESNDENTSNNNATD. The segment covering 58–70 has biased composition (acidic residues); that stretch reads PPEDDIDWGDMEN. The segment covering 109–118 has biased composition (polar residues); sequence TSQAPETSTG. A compositionally biased stretch (basic and acidic residues) spans 119–130; sequence AEEHQETTEESK. Ser-139 is modified (phosphoserine). Low complexity predominate over residues 182–196; the sequence is SSNNKNHNQSKNPQN.

The protein belongs to the SAP domain-containing ribonucleoprotein family.

The sequence is that of Protein mlo1 (mlo1) from Schizosaccharomyces pombe (strain 972 / ATCC 24843) (Fission yeast).